A 121-amino-acid polypeptide reads, in one-letter code: MSVNSIHLVGRAGRDPEVKYFESGNVVCNFTLAVNRRTSKKDEPPDWFDLEIWGKTAEIAGNYVKKGSLIGIQGSLKFDHWEDRNSGTPRSKPVIRVNNLDLLGSKRDNAEATMNNYPEEF.

Positions 3–104 (VNSIHLVGRA…IRVNNLDLLG (102 aa)) constitute an SSB domain.

Homotetramer.

This is Single-stranded DNA-binding protein 1 (ssb) from Synechocystis sp. (strain ATCC 27184 / PCC 6803 / Kazusa).